A 353-amino-acid polypeptide reads, in one-letter code: UPF0283 membrane protein YcjF (353 aa).

3 helical membrane passes run 70-90, 100-120, and 213-233; these read MVMG…IQWT, VALG…GSVV, and ESTL…FIAW.

The protein belongs to the UPF0283 family.

The protein localises to the cell inner membrane. In Shigella flexneri serotype 5b (strain 8401), this protein is UPF0283 membrane protein YcjF.